The following is a 146-amino-acid chain: Phospholipase A2, membrane associated (146 aa).

The first 21 residues, 1 to 21 (MKVLLLLAASIMAFGSIQVQG), serve as a signal peptide directing secretion. Intrachain disulfides connect Cys-47–Cys-139, Cys-49–Cys-65, Cys-64–Cys-119, Cys-70–Cys-146, Cys-71–Cys-112, Cys-80–Cys-105, and Cys-98–Cys-110. 3 residues coordinate Ca(2+): His-48, Gly-50, and Gly-52. Residue His-68 is part of the active site. Residue Asp-69 participates in Ca(2+) binding. Asp-113 is a catalytic residue.

Belongs to the phospholipase A2 family. It depends on Ca(2+) as a cofactor. In terms of tissue distribution, mainly in the Paneth cells adjacent to the stem population in the small intestines.

It localises to the secreted. Its subcellular location is the cell membrane. The protein resides in the mitochondrion outer membrane. It catalyses the reaction a 1,2-diacyl-sn-glycero-3-phosphoethanolamine + H2O = a 1-acyl-sn-glycero-3-phosphoethanolamine + a fatty acid + H(+). It carries out the reaction 1-hexadecanoyl-2-(9Z-octadecenoyl)-sn-glycero-3-phosphoethanolamine + H2O = 1-hexadecanoyl-sn-glycero-3-phosphoethanolamine + (9Z)-octadecenoate + H(+). The enzyme catalyses 1-hexadecanoyl-2-(9Z,12Z-octadecadienoyl)-sn-glycero-3-phosphoethanolamine + H2O = 1-hexadecanoyl-sn-glycero-3-phosphoethanolamine + (9Z,12Z)-octadecadienoate + H(+). The catalysed reaction is 1-hexadecanoyl-2-(5Z,8Z,11Z,14Z-eicosatetraenoyl)-sn-glycero-3-phosphoethanolamine + H2O = 1-hexadecanoyl-sn-glycero-3-phosphoethanolamine + (5Z,8Z,11Z,14Z)-eicosatetraenoate + H(+). It catalyses the reaction N-hexadecanoyl-1,2-di-(9Z-octadecenoyl)-sn-glycero-3-phosphoethanolamine + H2O = N-hexadecanoyl-1-(9Z-octadecenoyl)-sn-glycero-3-phosphoethanolamine + (9Z)-octadecenoate + H(+). It carries out the reaction 1,2-dihexadecanoyl-sn-glycero-3-phospho-(1'-sn-glycerol) + H2O = 1-hexadecanoyl-sn-glycero-3-phospho-(1'-sn-glycerol) + hexadecanoate + H(+). The enzyme catalyses 1-hexadecanoyl-2-(9Z-octadecenoyl)-sn-glycero-3-phosphoglycerol + H2O = 1-hexadecanoyl-sn-glycero-3-phosphoglycerol + (9Z)-octadecenoate + H(+). The catalysed reaction is 1-hexadecanoyl-2-(9Z-octadecenoyl)-sn-glycero-3-phospho-(1'-sn-glycerol) + H2O = 1-hexadecanoyl-sn-glycero-3-phospho-(1'-sn-glycerol) + (9Z)-octadecenoate + H(+). It catalyses the reaction a 1,2-diacyl-sn-glycero-3-phosphocholine + H2O = a 1-acyl-sn-glycero-3-phosphocholine + a fatty acid + H(+). It carries out the reaction 1,2-dihexadecanoyl-sn-glycero-3-phosphocholine + H2O = 1-hexadecanoyl-sn-glycero-3-phosphocholine + hexadecanoate + H(+). The enzyme catalyses 1-hexadecanoyl-2-(9Z-octadecenoyl)-sn-glycero-3-phosphocholine + H2O = 1-hexadecanoyl-sn-glycero-3-phosphocholine + (9Z)-octadecenoate + H(+). The catalysed reaction is 1-hexadecanoyl-2-(9Z,12Z-octadecadienoyl)-sn-glycero-3-phosphocholine + H2O = (9Z,12Z)-octadecadienoate + 1-hexadecanoyl-sn-glycero-3-phosphocholine + H(+). It catalyses the reaction 1-hexadecanoyl-2-(4Z,7Z,10Z,13Z,16Z,19Z-docosahexaenoyl)-sn-glycero-3-phosphocholine + H2O = (4Z,7Z,10Z,13Z,16Z,19Z)-docosahexaenoate + 1-hexadecanoyl-sn-glycero-3-phosphocholine + H(+). In terms of biological role, secretory calcium-dependent phospholipase A2 that primarily targets extracellular phospholipids with implications in host antimicrobial defense, inflammatory response and tissue regeneration. Hydrolyzes the ester bond of the fatty acyl group attached at sn-2 position of phospholipids (phospholipase A2 activity) with preference for phosphatidylethanolamines and phosphatidylglycerols over phosphatidylcholines. Contributes to lipid remodeling of cellular membranes and generation of lipid mediators involved in pathogen clearance. Displays bactericidal activity against Gram-positive bacteria by directly hydrolyzing phospholipids of the bacterial membrane. Upon sterile inflammation, targets membrane phospholipids of extracellular mitochondria released from activated platelets, generating free unsaturated fatty acids such as arachidonate that is used by neighboring leukocytes to synthesize inflammatory eicosanoids such as leukotrienes. Simultaneously, by compromising mitochondrial membrane integrity, promotes the release in circulation of potent damage-associated molecular pattern molecules that activate the innate immune response. Plays a stem cell regulator role in the intestinal crypt. Within intracellular compartment mediates Paneth cell differentiation and its stem cell supporting functions by inhibiting Wnt signaling pathway in intestinal stem cell (ICS). Secreted in the intestinal lumen upon inflammation, acts in an autocrine way and promotes prostaglandin E2 synthesis that stimulates Wnt signaling pathway in ICS cells and tissue regeneration. May play a role in the biosynthesis of N-acyl ethanolamines that regulate energy metabolism and inflammation. Hydrolyzes N-acyl phosphatidylethanolamines to N-acyl lysophosphatidylethanolamines, which are further cleaved by a lysophospholipase D to release N-acyl ethanolamines. Independent of its catalytic activity, acts as a ligand for integrins. Binds to and activates integrins ITGAV:ITGB3, ITGA4:ITGB1 and ITGA5:ITGB1. Binds to a site (site 2) which is distinct from the classical ligand-binding site (site 1) and induces integrin conformational changes and enhanced ligand binding to site 1. Induces cell proliferation in an integrin-dependent manner. In Mus musculus (Mouse), this protein is Phospholipase A2, membrane associated (Pla2g2a).